A 63-amino-acid chain; its full sequence is Eumenitin VP1 (63 aa).

Positions 1-22 (MRGTSFILFAVVVILGFLHANA) are cleaved as a signal peptide. AXPX repeat units lie at residues 22 to 25 (AEPL), 26 to 29 (ANPA), 32 to 35 (ANPD), 40 to 43 (ADPL), and 44 to 47 (ADPE). Positions 23-48 (EPLANPAPLANPDPLANADPLADPEA) are excised as a propeptide.

In terms of tissue distribution, expressed by the venom gland.

It localises to the secreted. The protein resides in the target cell membrane. Its function is as follows. Antimicrobial peptide with activities against the fungi B.cinerea (MIC=5 uM) and C.albicans (MIC=100 uM), the Gram-negative bacterium E.coli (MIC=25 uM) and the Gram-positive bacterium S.aureus (MIC=100 uM). Shows cytolytic activity against insect cell lines. Has no hemolytic activity against human erythrocytes. In vivo, peptide injection in the vicinity of the head and thorax of lepidopteran larvae induces feeding disorder followed by death due to starvation. This is Eumenitin VP1 from Eumenes pomiformis (Potter wasp).